The following is a 398-amino-acid chain: Ribosomal RNA large subunit methyltransferase F (398 aa).

Positions 1 to 12 are enriched in basic residues; that stretch reads MTPSRKPARPGA. The segment at 1-85 is disordered; it reads MTPSRKPARP…RNLHGQGYDF (85 aa). Composition is skewed to low complexity over residues 20 to 40 and 48 to 59; these read PSAK…AQPK and QAKSQAKPQAKS.

The protein belongs to the methyltransferase superfamily. METTL16/RlmF family.

The protein localises to the cytoplasm. The catalysed reaction is adenosine(1618) in 23S rRNA + S-adenosyl-L-methionine = N(6)-methyladenosine(1618) in 23S rRNA + S-adenosyl-L-homocysteine + H(+). Specifically methylates the adenine in position 1618 of 23S rRNA. The sequence is that of Ribosomal RNA large subunit methyltransferase F from Shewanella loihica (strain ATCC BAA-1088 / PV-4).